A 398-amino-acid polypeptide reads, in one-letter code: Acetate kinase (398 aa).

Mg(2+) is bound at residue Asn10. Lys17 is a binding site for ATP. Arg89 contributes to the substrate binding site. Asp148 (proton donor/acceptor) is an active-site residue. ATP contacts are provided by residues 208–212 (HLGNG), 283–285 (DCR), and 331–335 (GIGEN). A Mg(2+)-binding site is contributed by Glu385.

The protein belongs to the acetokinase family. Homodimer. The cofactor is Mg(2+). Mn(2+) serves as cofactor.

The protein resides in the cytoplasm. It carries out the reaction acetate + ATP = acetyl phosphate + ADP. It functions in the pathway metabolic intermediate biosynthesis; acetyl-CoA biosynthesis; acetyl-CoA from acetate: step 1/2. In terms of biological role, catalyzes the formation of acetyl phosphate from acetate and ATP. Can also catalyze the reverse reaction. The protein is Acetate kinase of Histophilus somni (strain 129Pt) (Haemophilus somnus).